The sequence spans 788 residues: MSTTGHRAGVFKKPAKPHKSWKGKRTKGEITTENRGREGVKQLTRSAHSTHRAVSKDARRNQLKMARDRKMADAMERRRTSNAPCLVTILSLGVGARPSEFLKKLATCDETIVQTHSPSTIDFAIPRFKSRISFLTPDKENVDSVLDAIRASDVLCFLWPLSAELSEWDEQLLTICKAAGLPTIVSVVPGLGGIQNHKKKEDVRKGIEFTISKWSMSNAGVMPADSVTDNLQLLRTLNETKKKPLTLQARHSYMLVENLEATESPEDSSKITLKAQGYLRGPEWNANNLIHLPGFGDFQISKIETAADPHPLKTSPPKGAEVIAKADEKRQSLETEITLDAMDGEQTWPTQEELEEADKEMRRVPKGTSSYQAAWILDDSEDDEDEEDEDEDMDDEEEDKDLEEDDEEEDTPMDLKSEAGETTASEMMFHDEIDEDINLAEVEKYRKERENAQWPDEVDTPIDQPARIRFQKYRGLKSFRTSTWDAKENLPVDYARIFQFANYKNTKKNVMSKIGGNDVDAGDAVIDKKFNGVFASVYIENVPVSVMEAYKETKNLVLFQLLPHEQKMSILNMVLKKHPSCTVPIGSEDQKFIFYVGFRQFEAHAVLSSNTPGDKFKLERFMPTEKTFVATVYAPITFNPATVLCFRQDDKGRQELVATGSVLDTNPDRIVLKRTVLSGHPYKINRRAVVVRYMFFNREDIDWFKPVELYTPSGRRGHIKEAVGTHGHMKCRFDQQLNAQDSVMLNLYKRVFPVWDYSLFNRNLNPSRFVERSRVESISLVQEDAMEE.

The tract at residues M1–V40 is disordered. The segment covering G9 to R25 has biased composition (basic residues). Residues T26–V40 show a composition bias toward basic and acidic residues. Residues A83–K243 form the Bms1-type G domain. Positions L354–I433 are disordered. A compositionally biased stretch (acidic residues) spans D378–P412.

This sequence belongs to the TRAFAC class translation factor GTPase superfamily. Bms1-like GTPase family. TSR1 subfamily.

The protein resides in the nucleus. It localises to the nucleolus. Its function is as follows. Required during maturation of the 40S ribosomal subunit in the nucleolus. The protein is Pre-rRNA-processing protein TSR1 homolog of Caenorhabditis briggsae.